The following is a 1011-amino-acid chain: Cell division cycle-associated protein 2 (1011 aa).

Polar residues predominate over residues 1 to 22; that stretch reads MDTCSQESEPLQTKESPINNAG. The disordered stretch occupies residues 1–26; the sequence is MDTCSQESEPLQTKESPINNAGKTPL. A phosphoserine mark is found at Ser-125, Ser-130, Ser-209, Ser-293, and Ser-310. A Phosphothreonine modification is found at Thr-313. Positions 380 to 440 constitute a PP1-binding domain; the sequence is KRKRVTFGED…PEWLPQPNFD (61 aa). Ser-391 and Ser-398 each carry phosphoserine. Disordered regions lie at residues 395–438 and 522–544; these read LDES…PQPN and PCKEKKTNRRKSQESKHADKVLP. Thr-403 bears the Phosphothreonine mark. Residues 418–431 show a composition bias toward low complexity; that stretch reads SSLSPPLLEQSPVP. Residue Ser-428 is modified to Phosphoserine. Basic and acidic residues predominate over residues 522-543; sequence PCKEKKTNRRKSQESKHADKVL. Phosphoserine occurs at positions 583, 702, and 747. Lys-753 is covalently cross-linked (Glycyl lysine isopeptide (Lys-Gly) (interchain with G-Cter in SUMO2)). Over residues 790–803 the composition is skewed to basic and acidic residues; the sequence is DQRKVSKSQGEDLG. Disordered regions lie at residues 790–835 and 896–1011; these read DQRK…GLHL and GLVW…LSEN. Over residues 931–945 the composition is skewed to polar residues; sequence SSRQDPCTLPSTSSE. Ser-967 carries the post-translational modification Phosphoserine. The segment covering 968–983 has biased composition (polar residues); the sequence is FCTSTLANPKSTTQSR. The span at 993–1011 shows a compositional bias: basic and acidic residues; that stretch reads QKRENTLQETSRESDLSEN.

Interacts with PPP1CC. Post-translationally, phosphorylated by CDK1. May regulate its subcellular location.

It localises to the nucleus. Its function is as follows. Regulator of chromosome structure during mitosis required for condensin-depleted chromosomes to retain their compact architecture through anaphase. Acts by mediating the recruitment of phopsphatase PP1-gamma subunit (PPP1CC) to chromatin at anaphase and into the following interphase. At anaphase onset, its association with chromatin targets a pool of PPP1CC to dephosphorylate substrates. The protein is Cell division cycle-associated protein 2 (CDCA2) of Bos taurus (Bovine).